The chain runs to 140 residues: Protein ARABIDOPSIS THALIANA ANTHER 7 (140 aa).

The first 20 residues, 1-20, serve as a signal peptide directing secretion; that stretch reads MKIHAILVVAFLVLMKTAVS. Disulfide bonds link Cys-29/Cys-87, Cys-39/Cys-54, Cys-55/Cys-111, and Cys-85/Cys-125.

It belongs to the plant LTP family. In terms of tissue distribution, tapetum-specific. Also present in pollen.

The protein resides in the endoplasmic reticulum lumen. The polypeptide is Protein ARABIDOPSIS THALIANA ANTHER 7 (Arabidopsis thaliana (Mouse-ear cress)).